We begin with the raw amino-acid sequence, 715 residues long: MDLIELQDIRKTYRLGEIDVPVLRGISLKVSPGDFVALMGTSGSGKTTLMNILGCLDRPTSGHYRFDGQDVVDLTPDQRAALRNRKIGFVFQNFNLLPRMSAVENVMMPLSYAGGGVSDQNGRERAGALLTRMGLGEHLDNEPSQLSGGQQQRVAIARALINNPSLLFADEPTGNLDSATSEEVLRVFQRLNEEEGVTIILVTHDPSVAQCARRIVRIRDGVIEPESGAVGDMPQVSKAAPAQSKPVHSAMRRGDLDKFRRSLHTALSSLRRNVLRAALTTLGIIIGVAAVIAMMEIGRGSSTAIQRTIASMGAHTLALLPGTAASGGVSFGGGSVMTMTPQDSEAIVNECPAVLAAAPIVRARTQVVHGSRNWVPAGIYGTTPTFLEIREWPLAEGDVFTERDVRNASKVCVLGQRLVDELFQGENPIGLEVRIKNVAFKVIGVLSPKGANMMGMDQDDLLLAPWTAIKYRVTGSSLANVNQSAASTSSASITDQVNSLSNLYPTEKVVLYPEISTTQAFDTPLPVRFTNVDQILVGIRSTSGTRAAIRQIGEVLRERHRLRPGEPDDFSVRDMTEMTKTLASTATMMTKLLLAVALISLIVGGVGIMNIMMVSVTERTREIGLRMAVGARAKNILQQFLFEAVLLCFLGGAVGILVGRGISHLVTVLLNWPTELSLDAILAAVGVSATVGIVFGYYPAWKASRLDPIVALRYE.

The region spanning 4 to 245 (IELQDIRKTY…VSKAAPAQSK (242 aa)) is the ABC transporter domain. Residue 40–47 (GTSGSGKT) participates in ATP binding. The interval 229 to 251 (AVGDMPQVSKAAPAQSKPVHSAM) is disordered. The next 4 helical transmembrane spans lie at 277–297 (AALT…MMEI), 592–612 (LLLA…MNIM), 639–659 (QFLF…ILVG), and 681–701 (ILAA…YPAW).

The protein belongs to the ABC transporter superfamily. Macrolide exporter (TC 3.A.1.122) family. As to quaternary structure, homodimer.

The protein localises to the cell inner membrane. Non-canonical ABC transporter that contains transmembrane domains (TMD), which form a pore in the inner membrane, and an ATP-binding domain (NBD), which is responsible for energy generation. Confers resistance against macrolides. This Syntrophobacter fumaroxidans (strain DSM 10017 / MPOB) protein is Macrolide export ATP-binding/permease protein MacB.